The sequence spans 247 residues: Adenosylcobinamide-GDP ribazoletransferase (247 aa).

Helical transmembrane passes span 34 to 54, 59 to 79, 113 to 133, 138 to 158, and 194 to 214; these read IITF…VFMV, CGVP…TGGF, GGLA…ELAL, ILAS…LLMY, and VLLP…AIFI.

It belongs to the CobS family. It depends on Mg(2+) as a cofactor.

Its subcellular location is the cell inner membrane. The catalysed reaction is alpha-ribazole + adenosylcob(III)inamide-GDP = adenosylcob(III)alamin + GMP + H(+). It carries out the reaction alpha-ribazole 5'-phosphate + adenosylcob(III)inamide-GDP = adenosylcob(III)alamin 5'-phosphate + GMP + H(+). It functions in the pathway cofactor biosynthesis; adenosylcobalamin biosynthesis; adenosylcobalamin from cob(II)yrinate a,c-diamide: step 7/7. In terms of biological role, joins adenosylcobinamide-GDP and alpha-ribazole to generate adenosylcobalamin (Ado-cobalamin). Also synthesizes adenosylcobalamin 5'-phosphate from adenosylcobinamide-GDP and alpha-ribazole 5'-phosphate. The polypeptide is Adenosylcobinamide-GDP ribazoletransferase (Escherichia coli O7:K1 (strain IAI39 / ExPEC)).